A 166-amino-acid polypeptide reads, in one-letter code: MRLILLSSLLLLGIFLANGDEVDPDGKVLNSLIYGVMHLQREFANLKGAFLTVHRARSFGSGSERLYVTNKEIKNFEALRQICEQAEGHIPSPQLENQNKAFANVLERHGKEAYLVVGDSANFTNWAAGEPNKAAGTCVKADTHGSWHSASCDDNLLVVCEFYFIL.

Residues 1 to 19 (MRLILLSSLLLLGIFLANG) form the signal peptide. In terms of domain architecture, C-type lectin spans 46–161 (LKGAFLTVHR…CDDNLLVVCE (116 aa)). Intrachain disulfides connect cysteine 83–cysteine 160 and cysteine 138–cysteine 152. Asparagine 122 carries an N-linked (GlcNAc...) asparagine glycan.

It belongs to the alpha-type phospholipase A2 inhibitor family. Homotrimer; non-covalently linked. Expressed by the liver.

The protein localises to the secreted. Its function is as follows. This phospholipase A2 inhibitor binds directly phospholipase A2 in the presence or absence of calcium. The polypeptide is Phospholipase A2 inhibitor clone 08 (Bothrops moojeni (Lance-headed viper)).